Here is a 927-residue protein sequence, read N- to C-terminus: Calmodulin-binding transcription activator CBT (927 aa).

A DNA-binding region (CG-1) is located at residues 26-152 (YEKLVAEAAA…YRQTAEENAM (127 aa)). Positions 70-96 (LYDRKVVRNFRKDGHNWKKKKDGRTVQ) are necessary and sufficient for nuclear localization. The Nuclear localization signal signature appears at 72 to 79 (DRKVVRNF). The ANK repeat unit spans residues 609 to 638 (SGWTALHWAAYHGRERMVATLLSAGANPSL). IQ domains lie at 757 to 786 (EIVAAMKIQHAFRNYNRKKAMRAAARIQSH) and 799 to 828 (MRRQVIRIQAAYRGHQVRRQYRKVIWSVGI). The segment at 826 to 845 (VGIVEKAILRWRKKRKGLRG) is calmodulin-binding. The necessary and sufficient for nuclear localization stretch occupies residues 830–851 (EKAILRWRKKRKGLRGIASGMP). Positions 882–911 (FNRSVVRVQALFRSYKAQQEYRRMKIAHEE) constitute an IQ 3 domain.

The protein belongs to the CAMTA family.

The protein resides in the nucleus. With respect to regulation, transcriptional activation activity is strongly reduced by calmodulin. Functionally, transcription activator that binds calmodulin in a calcium-dependent manner in vitro. Binds to the DNA consensus sequence 5'-T[AC]CG[CT]GT[GT][GT][GT][GT]T[GT]CG-3'. The sequence is that of Calmodulin-binding transcription activator CBT from Oryza sativa subsp. japonica (Rice).